Reading from the N-terminus, the 105-residue chain is MIASKFGIGQQVRHSLLGYLGVVVDIDPEYSLDEPSPDELAVNDELRAAPWYHVVMEDDDGQPVHTYLAEAQLRSEMRDEHPEQPSMDELARTIRKQLQAPRLRN.

The disordered stretch occupies residues 76–105 (EMRDEHPEQPSMDELARTIRKQLQAPRLRN).

This sequence belongs to the HspQ family.

It localises to the cytoplasm. Involved in the degradation of certain denaturated proteins, including DnaA, during heat shock stress. The protein is Heat shock protein HspQ of Salmonella agona (strain SL483).